The following is a 368-amino-acid chain: 2-aminoethylphosphonate--pyruvate transaminase (368 aa).

Lys-192 carries the post-translational modification N6-(pyridoxal phosphate)lysine.

The protein belongs to the class-V pyridoxal-phosphate-dependent aminotransferase family. PhnW subfamily. As to quaternary structure, homodimer. The cofactor is pyridoxal 5'-phosphate.

The catalysed reaction is (2-aminoethyl)phosphonate + pyruvate = phosphonoacetaldehyde + L-alanine. Involved in phosphonate degradation. This is 2-aminoethylphosphonate--pyruvate transaminase from Pseudomonas putida (strain ATCC 47054 / DSM 6125 / CFBP 8728 / NCIMB 11950 / KT2440).